The primary structure comprises 83 residues: uncharacterized protein (83 aa).

A helical membrane pass occupies residues 58–80; that stretch reads YWGYGAAYGISLGLIAGVALAGL.

The protein resides in the membrane. This is an uncharacterized protein from Bacillus subtilis (strain 168).